The following is a 611-amino-acid chain: 1,4-alpha-glucan branching enzyme GlgB (611 aa).

Asp302 (nucleophile) is an active-site residue. Glu343 (proton donor) is an active-site residue.

It belongs to the glycosyl hydrolase 13 family. GlgB subfamily. As to quaternary structure, monomer.

It carries out the reaction Transfers a segment of a (1-&gt;4)-alpha-D-glucan chain to a primary hydroxy group in a similar glucan chain.. The protein operates within glycan biosynthesis; glycogen biosynthesis. Its function is as follows. Catalyzes the formation of the alpha-1,6-glucosidic linkages in glycogen by scission of a 1,4-alpha-linked oligosaccharide from growing alpha-1,4-glucan chains and the subsequent attachment of the oligosaccharide to the alpha-1,6 position. The sequence is that of 1,4-alpha-glucan branching enzyme GlgB from Fusobacterium nucleatum subsp. nucleatum (strain ATCC 25586 / DSM 15643 / BCRC 10681 / CIP 101130 / JCM 8532 / KCTC 2640 / LMG 13131 / VPI 4355).